The chain runs to 367 residues: Phosphoribosylaminoimidazole-succinocarboxamide synthase (367 aa).

This sequence belongs to the SAICAR synthetase family.

The enzyme catalyses 5-amino-1-(5-phospho-D-ribosyl)imidazole-4-carboxylate + L-aspartate + ATP = (2S)-2-[5-amino-1-(5-phospho-beta-D-ribosyl)imidazole-4-carboxamido]succinate + ADP + phosphate + 2 H(+). It participates in purine metabolism; IMP biosynthesis via de novo pathway; 5-amino-1-(5-phospho-D-ribosyl)imidazole-4-carboxamide from 5-amino-1-(5-phospho-D-ribosyl)imidazole-4-carboxylate: step 1/2. In Aliivibrio salmonicida (strain LFI1238) (Vibrio salmonicida (strain LFI1238)), this protein is Phosphoribosylaminoimidazole-succinocarboxamide synthase.